A 179-amino-acid polypeptide reads, in one-letter code: MSRIGKQPVPVPAGVDVTIDGQKVSVKGPKGTLDLTVAEPITVSRNDDGAIVVTRPNDERRNRSLHGLSRTLVSNLVTGVTQGYTTKMEIFGVGYRVQLKGSNLEFALGYSHPVVIEAPEGITFAVQSPTKFSISGIDKQKVGQISANIRRLRRPDPYKGKGVRYEGEQIRRKVGKTGK.

Belongs to the universal ribosomal protein uL6 family. As to quaternary structure, part of the 50S ribosomal subunit.

Functionally, this protein binds to the 23S rRNA, and is important in its secondary structure. It is located near the subunit interface in the base of the L7/L12 stalk, and near the tRNA binding site of the peptidyltransferase center. The polypeptide is Large ribosomal subunit protein uL6 (Mycobacterium avium (strain 104)).